Consider the following 254-residue polypeptide: Acetylglutamate kinase (254 aa).

Residues 40 to 41 (GG), arginine 62, and asparagine 158 contribute to the substrate site.

It belongs to the acetylglutamate kinase family. ArgB subfamily.

The protein localises to the cytoplasm. The enzyme catalyses N-acetyl-L-glutamate + ATP = N-acetyl-L-glutamyl 5-phosphate + ADP. It functions in the pathway amino-acid biosynthesis; L-arginine biosynthesis; N(2)-acetyl-L-ornithine from L-glutamate: step 2/4. In terms of biological role, catalyzes the ATP-dependent phosphorylation of N-acetyl-L-glutamate. This is Acetylglutamate kinase from Chloroflexus aggregans (strain MD-66 / DSM 9485).